Here is a 371-residue protein sequence, read N- to C-terminus: Chaperone protein DnaJ (371 aa).

The region spanning 5–69 (DYYEVLGLSK…QKRAQYDQFG (65 aa)) is the J domain. Residues 133–215 (GKELNVEIPV…CHGSGKVRKR (83 aa)) form a CR-type zinc finger. Positions 146, 149, 163, 166, 189, 192, 203, and 206 each coordinate Zn(2+). 4 CXXCXGXG motif repeats span residues 146–153 (CDTCKGSG), 163–170 (CKHCSGSG), 189–196 (CSHCSGTG), and 203–210 (CTTCHGSG).

The protein belongs to the DnaJ family. Homodimer. Requires Zn(2+) as cofactor.

It localises to the cytoplasm. Its function is as follows. Participates actively in the response to hyperosmotic and heat shock by preventing the aggregation of stress-denatured proteins and by disaggregating proteins, also in an autonomous, DnaK-independent fashion. Unfolded proteins bind initially to DnaJ; upon interaction with the DnaJ-bound protein, DnaK hydrolyzes its bound ATP, resulting in the formation of a stable complex. GrpE releases ADP from DnaK; ATP binding to DnaK triggers the release of the substrate protein, thus completing the reaction cycle. Several rounds of ATP-dependent interactions between DnaJ, DnaK and GrpE are required for fully efficient folding. Also involved, together with DnaK and GrpE, in the DNA replication of plasmids through activation of initiation proteins. This chain is Chaperone protein DnaJ, found in Bacillus cereus (strain AH820).